The sequence spans 705 residues: Cell cycle serine/threonine-protein kinase CDC5/MSD2 (705 aa).

Residue T23 is modified to Phosphothreonine. Over residues 41–53 the composition is skewed to basic and acidic residues; that stretch reads QTKRLDPNNDHHH. The disordered stretch occupies residues 41–63; it reads QTKRLDPNNDHHHQPAQKKKREK. Residues 82–337 enclose the Protein kinase domain; it reads YHRGHFLGEG…LTEIMDYVWF (256 aa). Residues 88–96 and K110 each bind ATP; that span reads LGEGGFARC. Catalysis depends on D204, which acts as the Proton acceptor. Position 419 is a phosphoserine (S419). A POLO box 1 domain is found at 513–595; that stretch reads IVTKWVDYSN…VDFFAKYMKA (83 aa). Residues E553, H569, H609, and D612 each coordinate Zn(2+). In terms of domain architecture, POLO box 2 spans 614-700; the sequence is FLRRYTRYKP…IKEGLKQKST (87 aa).

Belongs to the protein kinase superfamily. Ser/Thr protein kinase family. CDC5/Polo subfamily. In terms of assembly, interacts with CDC48; the interaction is likely to result in CDC5 degradation. Interacts with CSA1.

It localises to the cytoplasm. The protein localises to the cytoskeleton. It is found in the microtubule organizing center. Its subcellular location is the spindle pole body. The enzyme catalyses L-seryl-[protein] + ATP = O-phospho-L-seryl-[protein] + ADP + H(+). It carries out the reaction L-threonyl-[protein] + ATP = O-phospho-L-threonyl-[protein] + ADP + H(+). Functionally, protein kinase required for the cell cycle where it is involved in mitotic exit. A component of the fear (CDC14 early anaphase release) network which promotes CDC14 release from the nucleolus during early anaphase. Phosphorylates SCC1/MCD1 and NET1. This chain is Cell cycle serine/threonine-protein kinase CDC5/MSD2 (CDC5), found in Saccharomyces cerevisiae (strain ATCC 204508 / S288c) (Baker's yeast).